We begin with the raw amino-acid sequence, 242 residues long: MAPK-interacting and spindle-stabilizing protein-like (242 aa).

Disordered regions lie at residues 1-145 (MSDE…SLGP) and 192-242 (PPGA…HSYH). Ser-2 is modified (N-acetylserine). Residues Ser-2, Ser-6, and Ser-15 each carry the phosphoserine modification. The segment covering 13–29 (EQSSAKPPAVTNTKAGH) has biased composition (polar residues). The segment covering 30 to 43 (SSQGWPGSSPWSNP) has biased composition (low complexity). Composition is skewed to pro residues over residues 44-53 (SAPPAMPSGL) and 75-114 (SMPP…PGPT). The segment covering 192-210 (PPGAWGPAAPYPGPAGSYP) has biased composition (low complexity).

This sequence belongs to the MISS family.

In Mus musculus (Mouse), this protein is MAPK-interacting and spindle-stabilizing protein-like (Mapk1ip1l).